Here is a 277-residue protein sequence, read N- to C-terminus: Alternative cytochrome c oxidase subunit 2 (277 aa).

Residues 1–40 (MAVALILLLIAIGSVLFHLFSPWWWTPIATNWGYIDDTIN) are Periplasmic-facing. The helical transmembrane segment at 41 to 61 (ITFWITGFVFTAVILFMAYCV) threads the bilayer. Over 62–83 (FRFHHKEGRQAAYNPENKKLEW) the chain is Cytoplasmic. A helical transmembrane segment spans residues 84–104 (WLSVGTGVGVAAMLAPGLVVW). Over 105-277 (HQFVTVPADA…VRAKYNSGDD (173 aa)) the chain is Periplasmic. The Cu cation site is built by H190, C225, C229, and H233.

The protein belongs to the cytochrome c oxidase subunit 2 family.

It localises to the cell membrane. The catalysed reaction is 4 Fe(II)-[cytochrome c] + O2 + 8 H(+)(in) = 4 Fe(III)-[cytochrome c] + 2 H2O + 4 H(+)(out). Its function is as follows. Cytochrome c oxidase is the component of the respiratory chain that catalyzes the reduction of oxygen to water. Subunits 1-3 form the functional core of the enzyme complex. Subunit 2 transfers the electrons from cytochrome c via its binuclear copper A center to the bimetallic center of the catalytic subunit 1. In Bradyrhizobium diazoefficiens (strain JCM 10833 / BCRC 13528 / IAM 13628 / NBRC 14792 / USDA 110), this protein is Alternative cytochrome c oxidase subunit 2 (coxM).